We begin with the raw amino-acid sequence, 506 residues long: Probable alpha-L-arabinofuranosidase B (506 aa).

The signal sequence occupies residues 1 to 26; sequence MSSGLSLERACAVALGIVASASLVAA. The interval 27–343 is catalytic; the sequence is GPCDIYSSGG…ADIVAAKYAI (317 aa). Cystine bridges form between C29–C39, C89–C94, and C184–C185. The N-linked (GlcNAc...) asparagine glycan is linked to N91. Residue D227 participates in substrate binding. Residue E229 is the Nucleophile of the active site. N230 and G304 together coordinate substrate. D305 serves as the catalytic Proton donor. The segment at 344–506 is ABD; that stretch reads ASLTSGPALT…VSWVVSTGFA (163 aa). C409 and C447 are oxidised to a cystine. Substrate is bound by residues H424, N426, F427, D443, H471, E473, L476, and D496.

The protein belongs to the glycosyl hydrolase 54 family.

It is found in the secreted. The catalysed reaction is Hydrolysis of terminal non-reducing alpha-L-arabinofuranoside residues in alpha-L-arabinosides.. It participates in glycan metabolism; L-arabinan degradation. Functionally, alpha-L-arabinofuranosidase involved in the degradation of arabinoxylan, a major component of plant hemicellulose. Able to hydrolyze 1,5-, 1,3- and 1,2-alpha-linkages not only in L-arabinofuranosyl oligosaccharides, but also in polysaccharides containing terminal non-reducing L-arabinofuranoses in side chains, like L-arabinan, arabinogalactan and arabinoxylan. This is Probable alpha-L-arabinofuranosidase B (abfB) from Aspergillus flavus (strain ATCC 200026 / FGSC A1120 / IAM 13836 / NRRL 3357 / JCM 12722 / SRRC 167).